The primary structure comprises 446 residues: C4-dicarboxylate transport protein (446 aa).

Transmembrane regions (helical) follow at residues 25–45 (VQVLAAIVAGVLLGHFWPAIG), 58–78 (LVKMIIAPVIFLTVATGIASI), 93–113 (FAYFLFFSTLALIVGLVVANV), 159–179 (ALTEGSILQALFVAILFGLAL), 199–219 (VFFGLVGMLMKFAPIGAFGAM), 236–256 (LLIATFYLTSLFFVIVILGAV), 322–342 (IYMTLAALFIAQAVGVDLSLG), 370–390 (AATLSIVPSVPVAGLALILGI), and 400–420 (LTNFIGNALAAIVVAGWEKGL).

This sequence belongs to the dicarboxylate/amino acid:cation symporter (DAACS) (TC 2.A.23) family.

Its subcellular location is the cell inner membrane. Its function is as follows. Responsible for the transport of dicarboxylates such as succinate, fumarate, and malate from the periplasm across the membrane. In Sphingopyxis alaskensis (strain DSM 13593 / LMG 18877 / RB2256) (Sphingomonas alaskensis), this protein is C4-dicarboxylate transport protein.